The primary structure comprises 247 residues: 1-(5-phosphoribosyl)-5-[(5-phosphoribosylamino)methylideneamino] imidazole-4-carboxamide isomerase (247 aa).

The Proton acceptor role is filled by aspartate 8. Aspartate 131 acts as the Proton donor in catalysis.

This sequence belongs to the HisA/HisF family.

It localises to the cytoplasm. It carries out the reaction 1-(5-phospho-beta-D-ribosyl)-5-[(5-phospho-beta-D-ribosylamino)methylideneamino]imidazole-4-carboxamide = 5-[(5-phospho-1-deoxy-D-ribulos-1-ylimino)methylamino]-1-(5-phospho-beta-D-ribosyl)imidazole-4-carboxamide. The protein operates within amino-acid biosynthesis; L-histidine biosynthesis; L-histidine from 5-phospho-alpha-D-ribose 1-diphosphate: step 4/9. This chain is 1-(5-phosphoribosyl)-5-[(5-phosphoribosylamino)methylideneamino] imidazole-4-carboxamide isomerase, found in Acidovorax sp. (strain JS42).